A 162-amino-acid chain; its full sequence is Transcription elongation factor GreA (162 aa).

A coiled-coil region spans residues 44 to 72; the sequence is ENAEYHAAKEKQSHIERRIAELSDILSRA.

Belongs to the GreA/GreB family.

Its function is as follows. Necessary for efficient RNA polymerase transcription elongation past template-encoded arresting sites. The arresting sites in DNA have the property of trapping a certain fraction of elongating RNA polymerases that pass through, resulting in locked ternary complexes. Cleavage of the nascent transcript by cleavage factors such as GreA or GreB allows the resumption of elongation from the new 3'terminus. GreA releases sequences of 2 to 3 nucleotides. This is Transcription elongation factor GreA from Nautilia profundicola (strain ATCC BAA-1463 / DSM 18972 / AmH).